Here is a 1063-residue protein sequence, read N- to C-terminus: Endo-1,4-beta-xylanase 2 (1063 aa).

CBM-cenC domains lie at 5–146 (NIVM…GPAP), 183–313 (NIIK…LEGP), 348–482 (NHIF…IEGP), and 517–662 (NIVS…QGPS). The 296-residue stretch at 711-1006 (SGATVKIRQT…NEAGKRFLEI (296 aa)) folds into the GH10 domain. The active-site Proton donor is the glutamate 840. Glutamate 941 serves as the catalytic Nucleophile.

Belongs to the glycosyl hydrolase 10 (cellulase F) family.

The catalysed reaction is Endohydrolysis of (1-&gt;4)-beta-D-xylosidic linkages in xylans.. Its pathway is glycan degradation; xylan degradation. Its function is as follows. Binds to and hydrolyzes insoluble and soluble xylan substrates. This Arabidopsis thaliana (Mouse-ear cress) protein is Endo-1,4-beta-xylanase 2.